The following is a 320-amino-acid chain: Ferrochelatase (320 aa).

Residues His-194 and Glu-272 each contribute to the Fe cation site.

This sequence belongs to the ferrochelatase family.

It is found in the cytoplasm. The enzyme catalyses heme b + 2 H(+) = protoporphyrin IX + Fe(2+). The protein operates within porphyrin-containing compound metabolism; protoheme biosynthesis; protoheme from protoporphyrin-IX: step 1/1. In terms of biological role, catalyzes the ferrous insertion into protoporphyrin IX. The chain is Ferrochelatase from Desulfotalea psychrophila (strain LSv54 / DSM 12343).